The chain runs to 414 residues: CCA-adding enzyme (414 aa).

Positions 8 and 11 each coordinate ATP. Gly8 and Arg11 together coordinate CTP. Mg(2+) contacts are provided by Asp21 and Asp23. ATP-binding residues include Arg91, Arg137, and Arg140. CTP contacts are provided by Arg91, Arg137, and Arg140.

Belongs to the tRNA nucleotidyltransferase/poly(A) polymerase family. Bacterial CCA-adding enzyme type 2 subfamily. Mg(2+) serves as cofactor.

The enzyme catalyses a tRNA precursor + 2 CTP + ATP = a tRNA with a 3' CCA end + 3 diphosphate. The catalysed reaction is a tRNA with a 3' CCA end + 2 CTP + ATP = a tRNA with a 3' CCACCA end + 3 diphosphate. Catalyzes the addition and repair of the essential 3'-terminal CCA sequence in tRNAs without using a nucleic acid template. Adds these three nucleotides in the order of C, C, and A to the tRNA nucleotide-73, using CTP and ATP as substrates and producing inorganic pyrophosphate. tRNA 3'-terminal CCA addition is required both for tRNA processing and repair. Also involved in tRNA surveillance by mediating tandem CCA addition to generate a CCACCA at the 3' terminus of unstable tRNAs. While stable tRNAs receive only 3'-terminal CCA, unstable tRNAs are marked with CCACCA and rapidly degraded. The chain is CCA-adding enzyme from Buchnera aphidicola subsp. Acyrthosiphon pisum (strain Tuc7).